The following is a 295-amino-acid chain: 33 kDa chaperonin (295 aa).

Cystine bridges form between Cys237/Cys239 and Cys270/Cys273.

The protein belongs to the HSP33 family. Post-translationally, under oxidizing conditions two disulfide bonds are formed involving the reactive cysteines. Under reducing conditions zinc is bound to the reactive cysteines and the protein is inactive.

It localises to the cytoplasm. Redox regulated molecular chaperone. Protects both thermally unfolding and oxidatively damaged proteins from irreversible aggregation. Plays an important role in the bacterial defense system toward oxidative stress. The polypeptide is 33 kDa chaperonin (Geobacillus sp. (strain WCH70)).